We begin with the raw amino-acid sequence, 285 residues long: Diaminopimelate epimerase (285 aa).

Substrate-binding residues include Asn-11 and Asn-62. Cys-71 acts as the Proton donor in catalysis. Substrate-binding positions include 72 to 73 (GN), Asn-167, Asn-200, and 218 to 219 (ER). The active-site Proton acceptor is Cys-227. 228–229 (GT) serves as a coordination point for substrate.

It belongs to the diaminopimelate epimerase family. Homodimer.

Its subcellular location is the cytoplasm. It carries out the reaction (2S,6S)-2,6-diaminopimelate = meso-2,6-diaminopimelate. It participates in amino-acid biosynthesis; L-lysine biosynthesis via DAP pathway; DL-2,6-diaminopimelate from LL-2,6-diaminopimelate: step 1/1. Catalyzes the stereoinversion of LL-2,6-diaminopimelate (L,L-DAP) to meso-diaminopimelate (meso-DAP), a precursor of L-lysine and an essential component of the bacterial peptidoglycan. This is Diaminopimelate epimerase from Agathobacter rectalis (strain ATCC 33656 / DSM 3377 / JCM 17463 / KCTC 5835 / VPI 0990) (Eubacterium rectale).